Here is a 200-residue protein sequence, read N- to C-terminus: ATP-dependent Clp protease proteolytic subunit (200 aa).

Residue Ser103 is the Nucleophile of the active site. His128 is an active-site residue.

Belongs to the peptidase S14 family. In terms of assembly, fourteen ClpP subunits assemble into 2 heptameric rings which stack back to back to give a disk-like structure with a central cavity, resembling the structure of eukaryotic proteasomes.

It is found in the cytoplasm. The enzyme catalyses Hydrolysis of proteins to small peptides in the presence of ATP and magnesium. alpha-casein is the usual test substrate. In the absence of ATP, only oligopeptides shorter than five residues are hydrolyzed (such as succinyl-Leu-Tyr-|-NHMec, and Leu-Tyr-Leu-|-Tyr-Trp, in which cleavage of the -Tyr-|-Leu- and -Tyr-|-Trp bonds also occurs).. In terms of biological role, cleaves peptides in various proteins in a process that requires ATP hydrolysis. Has a chymotrypsin-like activity. Plays a major role in the degradation of misfolded proteins. The protein is ATP-dependent Clp protease proteolytic subunit of Vibrio parahaemolyticus serotype O3:K6 (strain RIMD 2210633).